The primary structure comprises 116 residues: Protein Rev (116 aa).

2 positions are modified to phosphoserine; by host CK2: serine 5 and serine 8. The tract at residues leucine 18–asparagine 26 is homomultimerization. Positions tyrosine 23–arginine 48 are disordered. A Nuclear localization signal and RNA-binding (RRE) motif is present at residues threonine 34–arginine 50. The segment covering glutamine 36–glutamate 47 has biased composition (basic residues). The Nuclear export signal and binding to XPO1 motif lies at leucine 73–aspartate 84. Phosphoserine; by host is present on residues serine 92 and serine 99. A disordered region spans residues serine 92–glutamate 116.

It belongs to the HIV-1 REV protein family. In terms of assembly, homomultimer; when bound to the RRE. Multimeric assembly is essential for activity and may involve XPO1. Binds to human KPNB1, XPO1, TNPO1, RANBP5 and IPO7. Interacts with the viral Integrase. Interacts with human KHDRBS1. Interacts with human NAP1; this interaction decreases Rev multimerization and stimulates its activity. Interacts with human DEAD-box helicases DDX3 and DDX24; these interactions may serve for viral RNA export to the cytoplasm and packaging, respectively. Interacts with human PSIP1; this interaction may inhibit HIV-1 DNA integration by promoting dissociation of the Integrase-LEDGF/p75 complex. Asymmetrically arginine dimethylated at one site by host PRMT6. Methylation impairs the RNA-binding activity and export of viral RNA from the nucleus to the cytoplasm. Post-translationally, phosphorylated by protein kinase CK2. Presence of, and maybe binding to the N-terminus of the regulatory beta subunit of CK2 is necessary for CK2-mediated Rev's phosphorylation.

It is found in the host nucleus. The protein resides in the host nucleolus. It localises to the host cytoplasm. Escorts unspliced or incompletely spliced viral pre-mRNAs (late transcripts) out of the nucleus of infected cells. These pre-mRNAs carry a recognition sequence called Rev responsive element (RRE) located in the env gene, that is not present in fully spliced viral mRNAs (early transcripts). This function is essential since most viral proteins are translated from unspliced or partially spliced pre-mRNAs which cannot exit the nucleus by the pathway used by fully processed cellular mRNAs. Rev itself is translated from a fully spliced mRNA that readily exits the nucleus. Rev's nuclear localization signal (NLS) binds directly to KPNB1/Importin beta-1 without previous binding to KPNA1/Importin alpha-1. KPNB1 binds to the GDP bound form of RAN (Ran-GDP) and targets Rev to the nucleus. In the nucleus, the conversion from Ran-GDP to Ran-GTP dissociates Rev from KPNB1 and allows Rev's binding to the RRE in viral pre-mRNAs. Rev multimerization on the RRE via cooperative assembly exposes its nuclear export signal (NES) to the surface. Rev can then form a complex with XPO1/CRM1 and Ran-GTP, leading to nuclear export of the complex. Conversion from Ran-GTP to Ran-GDP mediates dissociation of the Rev/RRE/XPO1/RAN complex, so that Rev can return to the nucleus for a subsequent round of export. Beside KPNB1, also seems to interact with TNPO1/Transportin-1, RANBP5/IPO5 and IPO7/RANBP7 for nuclear import. The nucleoporin-like HRB/RIP is an essential cofactor that probably indirectly interacts with Rev to release HIV RNAs from the perinuclear region to the cytoplasm. The polypeptide is Protein Rev (Human immunodeficiency virus type 1 group M subtype B (isolate SC) (HIV-1)).